The chain runs to 457 residues: Alkylcitrate synthase phiJ (457 aa).

Catalysis depends on residues His-328 and Asp-384.

The protein belongs to the citrate synthase family.

It carries out the reaction (2E,10E)-dode-2,10-dicenoyl-CoA + oxaloacetate + H2O = (4E,11E)-2-hydroxytrideca-4,11-dien-1,2,3-tricarboxylate + CoA + H(+). It functions in the pathway secondary metabolite biosynthesis. Its function is as follows. Alkylcitrate synthase; part of the gene cluster that mediates the biosynthesis of the antihypercholesterolemic agents phomoidrides which are dimeric anhydrides. Within the pathway, the alkylcitrate synthase (ACS) phiJ and the alkylcitrate dehydratase (ACDH) phiI produce the decarboxylated monomeric anhydrides by coupling the C12-fatty acyl product from phiA with oxalacetic acid. The pathway begins with the highly reducing polyketide synthase phiA that catalyzes the formation of a C12-fatty acyl-ACP, starting from one acetate and 5 malonate units. The hydrolase phiM is involved in the release of the C12-fatty acyl chain from phiA. The alkylcitrate synthase (ACS) phiJ and the alkylcitrate dehydratase (ACDH) phiI then give rise to decarboxylated monomeric anhydrides by coupling the C12-fatty acyl chain with oxalacetic acid. The cyclase phiC is responsible for the dimerization of the monomeric anhydrides which leads to the production of prephomoidride that contains the characteristic bicyclo[4.3.1]deca-1,6-diene system of phomoidrides. Iterative oxidation catalyzed by the alpha-ketoglutarate-dependent dioxygenase phiK produced then phomoidride A. Finally, the methyltransferase phiE converts phomoidride A to phomoidride B via an acetalization reaction. The phosphatidylethanolamine-binding protein phiB and phiN are not essential for dimerization and their functions have still to be determined. This is Alkylcitrate synthase phiJ from Fungal sp. (strain ATCC 74256).